Here is a 532-residue protein sequence, read N- to C-terminus: Phosphoenolpyruvate carboxykinase (ATP) (532 aa).

Substrate is bound by residues arginine 60, tyrosine 200, and lysine 206. ATP contacts are provided by residues lysine 206, histidine 225, and 242–250 (GLSGTGKTT). Positions 206 and 225 each coordinate Mn(2+). Serine 244 serves as a coordination point for substrate. Residue aspartate 263 participates in Mn(2+) binding. ATP is bound by residues glutamate 291, arginine 327, 443 to 444 (RI), and threonine 449. Arginine 327 contributes to the substrate binding site.

This sequence belongs to the phosphoenolpyruvate carboxykinase (ATP) family. Monomer. The cofactor is Mn(2+).

It localises to the cytoplasm. It catalyses the reaction oxaloacetate + ATP = phosphoenolpyruvate + ADP + CO2. The protein operates within carbohydrate biosynthesis; gluconeogenesis. Inhibited by p-chloromercuribenzoate. In terms of biological role, involved in gluconeogenesis. Catalyzes the conversion of oxaloacetate (OAA) to phosphoenolpyruvate (PEP) through direct phosphoryl transfer between the nucleoside triphosphate and OAA. This chain is Phosphoenolpyruvate carboxykinase (ATP), found in Anaerobiospirillum succiniciproducens.